The chain runs to 476 residues: Cytosolic Fe-S cluster assembly factor narfl (476 aa).

The [4Fe-4S] cluster site is built by Cys-24, Cys-71, Cys-74, Cys-77, Cys-190, Cys-246, Cys-395, and Cys-399.

Belongs to the NARF family. As to quaternary structure, component of the CIA complex.

Functionally, component of the cytosolic iron-sulfur protein assembly (CIA) complex, a multiprotein complex that mediates the incorporation of iron-sulfur cluster into extramitochondrial Fe/S proteins. This chain is Cytosolic Fe-S cluster assembly factor narfl (narfl), found in Xenopus tropicalis (Western clawed frog).